The following is a 258-amino-acid chain: MFSYISNYLISVEPLGFILYYTSLYIWIPSLLQTIFNNNEKQLSYSSKIEWTNKIVATISSIVSFSLSCYCIYNKKSWVTNEMTSTCALSDFILKFISFYFLFDALHLIIYYKQLFDWPIIIHHLVVGILSYVYIGLYYKKVHLTLLYFLLFEITNPFIHMKWFLKDLKLENHILYSINGFMMAFFFIFIRDIYVPIKVVKIYINGYTELNSIANTIIFFCFPIITILNLFWTYLVIKGILKHLSRTKTSTPQIKKKN.

7 consecutive transmembrane segments (helical) span residues 8–28 (YLIS…YIWI), 49–71 (IEWT…SCYC), 92–112 (FILK…IIYY), 118–138 (WPII…IGLY), 144–164 (LTLL…MKWF), 170–190 (LENH…FIFI), and 217–237 (IIFF…YLVI). The region spanning 46 to 245 (SSKIEWTNKI…VIKGILKHLS (200 aa)) is the TLC domain.

It belongs to the TLCD4 family.

The protein localises to the membrane. In Dictyostelium discoideum (Social amoeba), this protein is TLC domain-containing protein 4 A (tlcd4a).